Reading from the N-terminus, the 60-residue chain is Large ribosomal subunit protein uL30 (60 aa).

Belongs to the universal ribosomal protein uL30 family. In terms of assembly, part of the 50S ribosomal subunit.

This chain is Large ribosomal subunit protein uL30, found in Shewanella sp. (strain MR-7).